The following is a 191-amino-acid chain: Adenylate kinase (191 aa).

11–16 (GAGKGT) is an ATP binding site. The interval 31 to 60 (STGDILRSNVAERSPLGIKAKDYMDKGDLV) is NMP. Residues threonine 32, arginine 37, 58–60 (DLV), 86–89 (GFPR), and glutamine 93 each bind AMP. The interval 132–138 (SRKREDD) is LID. Arginine 133 lines the ATP pocket. Residues arginine 135 and arginine 146 each contribute to the AMP site. Asparagine 174 is a binding site for ATP.

Belongs to the adenylate kinase family. As to quaternary structure, monomer.

It localises to the cytoplasm. The catalysed reaction is AMP + ATP = 2 ADP. It functions in the pathway purine metabolism; AMP biosynthesis via salvage pathway; AMP from ADP: step 1/1. Its function is as follows. Catalyzes the reversible transfer of the terminal phosphate group between ATP and AMP. Plays an important role in cellular energy homeostasis and in adenine nucleotide metabolism. The sequence is that of Adenylate kinase from Trichodesmium erythraeum (strain IMS101).